We begin with the raw amino-acid sequence, 120 residues long: Glycine cleavage system H protein (120 aa).

The Lipoyl-binding domain occupies 17–99 (IATVGITSHA…QGAGWLYRMR (83 aa)). The residue at position 58 (Lys58) is an N6-lipoyllysine.

The protein belongs to the GcvH family. In terms of assembly, the glycine cleavage system is composed of four proteins: P, T, L and H. Requires (R)-lipoate as cofactor.

The glycine cleavage system catalyzes the degradation of glycine. The H protein shuttles the methylamine group of glycine from the P protein to the T protein. This is Glycine cleavage system H protein from Methylobacterium nodulans (strain LMG 21967 / CNCM I-2342 / ORS 2060).